The primary structure comprises 909 residues: Disintegrin and metalloproteinase domain-containing protein 12 (909 aa).

Positions 1 to 28 (MAARPLPVSPARALLLALAGALLAPCEA) are cleaved as a signal peptide. The propeptide occupies 29–207 (RGVSLWNQGR…SQTWARRHKR (179 aa)). N-linked (GlcNAc...) asparagine glycosylation is found at asparagine 111 and asparagine 149. A Cysteine switch motif is present at residues 177 to 184 (GSCGSHHN). Zn(2+) is bound by residues cysteine 179 and histidine 350. The Extracellular portion of the chain corresponds to 208–708 (ETLKATKYVE…GPIRQADNQG (501 aa)). Residues 214–416 (KYVELVIVAD…GMGVCLFNLP (203 aa)) enclose the Peptidase M12B domain. 3 disulfide bridges follow: cysteine 325/cysteine 411, cysteine 367/cysteine 395, and cysteine 369/cysteine 378. Glutamate 351 is an active-site residue. Zn(2+) is bound by residues histidine 354 and histidine 360. 2 N-linked (GlcNAc...) asparagine glycosylation sites follow: asparagine 381 and asparagine 452. Residues 424–510 (GQKCGNRFVE…HCPANVYLHD (87 aa)) form the Disintegrin domain. A disulfide bridge connects residues cysteine 482 and cysteine 502. Asparagine 651 carries an N-linked (GlcNAc...) asparagine glycan. The region spanning 656 to 688 (GVHECAMQCHGRGVCNNRKNCHCEAHWAPPFCD) is the EGF-like domain. 3 disulfide bridges follow: cysteine 660–cysteine 670, cysteine 664–cysteine 676, and cysteine 678–cysteine 687. The chain crosses the membrane as a helical span at residues 709–729 (LTIGILVTILCLLAAGFVVYL). The Cytoplasmic portion of the chain corresponds to 730-909 (KRKTLIRLLF…PRSTHTAYIK (180 aa)). Positions 822–862 (LHRAPRAPSVPARPLPAKPALRQAQGTCKPNPPQKPLPADP) are disordered. Positions 828 to 834 (APSVPAR) match the SH3-binding; class II motif. The SH3-binding; class I signature appears at 834 to 841 (RPLPAKPA). The span at 851–860 (PNPPQKPLPA) shows a compositional bias: pro residues. The SH3-binding; class I motif lies at 885–891 (RLAPLRP). Tyrosine 907 is modified (phosphotyrosine; by SRC).

Interacts with alpha-actinin-2 and with syndecans. Interacts with SH3PXD2A. Interacts with FST3. Interacts with RACK1; the interaction is required for PKC-dependent translocation of ADAM12 to the cell membrane. Zn(2+) serves as cofactor. In terms of processing, the precursor is cleaved by a furin endopeptidase. As to expression, isoform 1 is expressed in placenta and skeletal, cardiac, and smooth muscle. Isoform 2 seems to be expressed only in placenta or in embryo and fetus. Both forms were expressed in some tumor cells lines. Not detected in brain, lung, liver, kidney or pancreas.

The protein resides in the cell membrane. Its subcellular location is the secreted. Involved in skeletal muscle regeneration, specifically at the onset of cell fusion. Also involved in macrophage-derived giant cells (MGC) and osteoclast formation from mononuclear precursors. The sequence is that of Disintegrin and metalloproteinase domain-containing protein 12 (ADAM12) from Homo sapiens (Human).